The following is a 516-amino-acid chain: Probable metalloreductase AIM14 (516 aa).

Transmembrane regions (helical) follow at residues 18–38 (IGYG…LLLL), 64–84 (LHLP…YSVI), 97–117 (LSYV…YILS), 128–148 (HMWL…AFVI), 168–188 (LLGF…TGVI), 195–215 (SFYM…PVHA), and 217–237 (PGVA…HALA). In terms of domain architecture, Ferric oxidoreductase spans 94–207 (LGRLSYVLLF…MVHQINAFAI (114 aa)). An FAD-binding FR-type domain is found at 238–363 (RVSFCMSSAV…GGTGISLGLP (126 aa)).

Belongs to the ferric reductase (FRE) family. AIM14 subfamily.

It is found in the membrane. Its function is as follows. Probable cell surface metalloreductase. May be involved in iron or copper homeostasis. The protein is Probable metalloreductase AIM14 (AIM14) of Eremothecium gossypii (strain ATCC 10895 / CBS 109.51 / FGSC 9923 / NRRL Y-1056) (Yeast).